Consider the following 59-residue polypeptide: Large ribosomal subunit protein eL37 (59 aa).

Residues Cys-20, Cys-23, Cys-35, and Cys-38 each contribute to the Zn(2+) site. The segment at 20–38 (CRRCGRHSFHRRKGYCAAC) adopts a C4-type zinc-finger fold.

This sequence belongs to the eukaryotic ribosomal protein eL37 family. The cofactor is Zn(2+).

In terms of biological role, binds to the 23S rRNA. In Archaeoglobus fulgidus (strain ATCC 49558 / DSM 4304 / JCM 9628 / NBRC 100126 / VC-16), this protein is Large ribosomal subunit protein eL37 (rpl37e).